Consider the following 213-residue polypeptide: Guanylate kinase (213 aa).

One can recognise a Guanylate kinase-like domain in the interval 12–190 (GLCLVVAAPS…AIDQVRTILH (179 aa)). 19–26 (APSGAGKS) serves as a coordination point for ATP.

This sequence belongs to the guanylate kinase family.

It localises to the cytoplasm. It catalyses the reaction GMP + ATP = GDP + ADP. Functionally, essential for recycling GMP and indirectly, cGMP. The chain is Guanylate kinase from Granulibacter bethesdensis (strain ATCC BAA-1260 / CGDNIH1).